The following is a 112-amino-acid chain: B3 domain-containing protein At1g43171 (112 aa).

Positions 19 to 112 (DIVGNVALPK…FENKFIVLNF (94 aa)) form a DNA-binding region, TF-B3.

Its subcellular location is the nucleus. The sequence is that of B3 domain-containing protein At1g43171 from Arabidopsis thaliana (Mouse-ear cress).